Consider the following 211-residue polypeptide: uncharacterized protein (211 aa).

Over 1 to 33 (MQNGTEDKSNIPARSNDDVLPPLAVRLTMKVMR) the chain is Cytoplasmic. The helical transmembrane segment at 34 to 54 (LIFIGKMFAYSFVPFPPFKLL) threads the bilayer. The Lumenal portion of the chain corresponds to 55 to 58 (TFDN). A helical membrane pass occupies residues 59–79 (TVGWFVAYSAIVSIWGFAVWM). At 80-116 (ERGYRHKINLLPPRCTKIRCSRCNTRIRSPNWFKYKN) the chain is on the cytoplasmic side. The helical transmembrane segment at 117 to 137 (WLYFFLLYVSLTTSNLIIQLA) threads the bilayer. The Lumenal segment spans residues 138 to 162 (SFMTEMSRRGISVPGTKDPGKRDYL). Residues 163-183 (GLIIPMRFIGAFIHYMTANLF) form a helical membrane-spanning segment. At 184–211 (KEYYLHNGPLEKNDRPSTDEKTSENETL) the chain is on the cytoplasmic side.

The protein resides in the endoplasmic reticulum membrane. This is an uncharacterized protein from Saccharomyces cerevisiae (strain ATCC 204508 / S288c) (Baker's yeast).